Consider the following 85-residue polypeptide: Small ribosomal subunit protein bS16 (85 aa).

This sequence belongs to the bacterial ribosomal protein bS16 family.

The sequence is that of Small ribosomal subunit protein bS16 from Acinetobacter baylyi (strain ATCC 33305 / BD413 / ADP1).